A 158-amino-acid chain; its full sequence is Urease accessory protein UreE (158 aa).

The tract at residues 133 to 158 (PEGGAYQAHSHDGHSHHQGHTHDHHD) is disordered. Basic and acidic residues predominate over residues 141–158 (HSHDGHSHHQGHTHDHHD).

The protein belongs to the UreE family.

Its subcellular location is the cytoplasm. In terms of biological role, involved in urease metallocenter assembly. Binds nickel. Probably functions as a nickel donor during metallocenter assembly. This Chelativorans sp. (strain BNC1) protein is Urease accessory protein UreE.